Reading from the N-terminus, the 506-residue chain is DNA nucleotidylexotransferase (506 aa).

The Nuclear localization signal motif lies at 11–17; sequence SQRKRQK. The region spanning 27 to 124 is the BRCT domain; the sequence is GYEIKFNKLV…RPVDLEKKYH (98 aa). The involved in DNA binding stretch occupies residues 258–262; that stretch reads VGVKT. Residues 333–338 and 342–345 each bind a 2'-deoxyribonucleoside 5'-triphosphate; these read GFRRGK and HDID. The Mg(2+) site is built by Asp343, Asp345, and Asp430. 445–446 is an a 2'-deoxyribonucleoside 5'-triphosphate binding site; sequence GW.

This sequence belongs to the DNA polymerase type-X family. Requires Mg(2+) as cofactor.

Its subcellular location is the nucleus. It carries out the reaction DNA(n) + a 2'-deoxyribonucleoside 5'-triphosphate = DNA(n+1) + diphosphate. In terms of biological role, template-independent DNA polymerase which catalyzes the random addition of deoxynucleoside 5'-triphosphate to the 3'-end of a DNA initiator. One of the in vivo functions of this enzyme is the addition of nucleotides at the junction (N region) of rearranged Ig heavy chain and T-cell receptor gene segments during the maturation of B- and T-cells. The chain is DNA nucleotidylexotransferase (DNTT) from Gallus gallus (Chicken).